Here is a 289-residue protein sequence, read N- to C-terminus: Acetyl-coenzyme A carboxylase carboxyl transferase subunit beta (289 aa).

Positions 28–289 (VMTKCPKCKK…QGGEMAVWQS (262 aa)) constitute a CoA carboxyltransferase N-terminal domain. Positions 32, 35, 51, and 54 each coordinate Zn(2+). Residues 32–54 (CPKCKKIMYTKELLKNLKVCVNC) form a C4-type zinc finger.

Belongs to the AccD/PCCB family. Acetyl-CoA carboxylase is a heterohexamer composed of biotin carboxyl carrier protein (AccB), biotin carboxylase (AccC) and two subunits each of ACCase subunit alpha (AccA) and ACCase subunit beta (AccD). The cofactor is Zn(2+).

It is found in the cytoplasm. The catalysed reaction is N(6)-carboxybiotinyl-L-lysyl-[protein] + acetyl-CoA = N(6)-biotinyl-L-lysyl-[protein] + malonyl-CoA. It functions in the pathway lipid metabolism; malonyl-CoA biosynthesis; malonyl-CoA from acetyl-CoA: step 1/1. Component of the acetyl coenzyme A carboxylase (ACC) complex. Biotin carboxylase (BC) catalyzes the carboxylation of biotin on its carrier protein (BCCP) and then the CO(2) group is transferred by the transcarboxylase to acetyl-CoA to form malonyl-CoA. In Bacillus cereus (strain AH187), this protein is Acetyl-coenzyme A carboxylase carboxyl transferase subunit beta.